A 61-amino-acid chain; its full sequence is Small ribosomal subunit protein uS14 (61 aa).

Zn(2+) contacts are provided by Cys24, Cys27, Cys40, and Cys43.

The protein belongs to the universal ribosomal protein uS14 family. Zinc-binding uS14 subfamily. Part of the 30S ribosomal subunit. Contacts proteins S3 and S10. It depends on Zn(2+) as a cofactor.

Functionally, binds 16S rRNA, required for the assembly of 30S particles and may also be responsible for determining the conformation of the 16S rRNA at the A site. This is Small ribosomal subunit protein uS14 from Rubrobacter xylanophilus (strain DSM 9941 / JCM 11954 / NBRC 16129 / PRD-1).